We begin with the raw amino-acid sequence, 390 residues long: Putative MSV199 domain-containing protein 211L (390 aa).

Positions 181-263 form a coiled coil; it reads HDRKAQEEKE…FDLSDVRDRL (83 aa).

The polypeptide is Putative MSV199 domain-containing protein 211L (Acheta domesticus (House cricket)).